Here is a 302-residue protein sequence, read N- to C-terminus: Urease accessory protein UreD 2 (302 aa).

The protein belongs to the UreD family. UreD, UreF and UreG form a complex that acts as a GTP-hydrolysis-dependent molecular chaperone, activating the urease apoprotein by helping to assemble the nickel containing metallocenter of UreC. The UreE protein probably delivers the nickel.

Its subcellular location is the cytoplasm. Functionally, required for maturation of urease via the functional incorporation of the urease nickel metallocenter. The polypeptide is Urease accessory protein UreD 2 (Brucella melitensis biotype 1 (strain ATCC 23456 / CCUG 17765 / NCTC 10094 / 16M)).